A 279-amino-acid chain; its full sequence is Protein ABIL4 (279 aa).

Disordered regions lie at residues 192–211 and 219–241; these read VHNNINNRTPNKRSNSPMRF and LLKRSSSPSQPKKPPLALPEPQR. Positions 194–208 are enriched in polar residues; the sequence is NNINNRTPNKRSNSP. Low complexity predominate over residues 219–228; sequence LLKRSSSPSQ.

Belongs to the ABI family. In terms of assembly, binds SCAR.

It localises to the cytoplasm. Its subcellular location is the cytoskeleton. Its function is as follows. Involved in regulation of actin and microtubule organization. Part of a WAVE complex that activates the Arp2/3 complex. This chain is Protein ABIL4 (ABIL4), found in Arabidopsis thaliana (Mouse-ear cress).